The following is a 426-amino-acid chain: UDP-N-acetylglucosamine 1-carboxyvinyltransferase 2 (426 aa).

22-23 (KN) lines the phosphoenolpyruvate pocket. Position 92 (Arg92) interacts with UDP-N-acetyl-alpha-D-glucosamine. Asp116 (proton donor) is an active-site residue. Residues 121–125 (RPIDQ), Asp307, and Ile329 each bind UDP-N-acetyl-alpha-D-glucosamine.

This sequence belongs to the EPSP synthase family. MurA subfamily.

The protein resides in the cytoplasm. It catalyses the reaction phosphoenolpyruvate + UDP-N-acetyl-alpha-D-glucosamine = UDP-N-acetyl-3-O-(1-carboxyvinyl)-alpha-D-glucosamine + phosphate. It functions in the pathway cell wall biogenesis; peptidoglycan biosynthesis. Cell wall formation. Adds enolpyruvyl to UDP-N-acetylglucosamine. In Lactiplantibacillus plantarum (strain ATCC BAA-793 / NCIMB 8826 / WCFS1) (Lactobacillus plantarum), this protein is UDP-N-acetylglucosamine 1-carboxyvinyltransferase 2.